The sequence spans 640 residues: Probable potassium transport system protein Kup (640 aa).

A run of 12 helical transmembrane segments spans residues 26-46 (IAGL…TSPL), 69-89 (ILSL…VLFI), 117-137 (AWVL…DGMI), 155-175 (PAFR…LFVI), 186-206 (IFGP…IAGI), 224-244 (FFAD…LAIT), 265-285 (WFLV…ALIL), 297-317 (LLVP…ATII), 355-375 (IYVP…VVGF), 384-404 (AYGI…FVVV), 415-435 (AGLF…ATTV), and 437-457 (ILAG…LLTT).

This sequence belongs to the HAK/KUP transporter (TC 2.A.72) family.

It localises to the cell inner membrane. It catalyses the reaction K(+)(in) + H(+)(in) = K(+)(out) + H(+)(out). Transport of potassium into the cell. Likely operates as a K(+):H(+) symporter. In Aromatoleum aromaticum (strain DSM 19018 / LMG 30748 / EbN1) (Azoarcus sp. (strain EbN1)), this protein is Probable potassium transport system protein Kup.